A 218-amino-acid polypeptide reads, in one-letter code: NAD(P)H-quinone oxidoreductase subunit I (218 aa).

4Fe-4S ferredoxin-type domains are found at residues 55-84 (GRIHYEFDKCIACEVCVRVCPINLPVVDWV) and 95-124 (RNYSIDFGACIFCGNCVEYCPTNCLSMTEE). Cys64, Cys67, Cys70, Cys74, Cys104, Cys107, Cys110, and Cys114 together coordinate [4Fe-4S] cluster. The segment at 179–218 (LRAGKLPSQIIKELQADKSEEEGKNNSSDMVPNKLNSTNK) is disordered. Residues 192-202 (LQADKSEEEGK) show a composition bias toward basic and acidic residues. The segment covering 203-218 (NNSSDMVPNKLNSTNK) has biased composition (polar residues).

It belongs to the complex I 23 kDa subunit family. In terms of assembly, NDH-1 is composed of at least 11 different subunits. The cofactor is [4Fe-4S] cluster.

The protein resides in the cellular thylakoid membrane. It catalyses the reaction a plastoquinone + NADH + (n+1) H(+)(in) = a plastoquinol + NAD(+) + n H(+)(out). It carries out the reaction a plastoquinone + NADPH + (n+1) H(+)(in) = a plastoquinol + NADP(+) + n H(+)(out). Functionally, NDH-1 shuttles electrons from an unknown electron donor, via FMN and iron-sulfur (Fe-S) centers, to quinones in the respiratory and/or the photosynthetic chain. The immediate electron acceptor for the enzyme in this species is believed to be plastoquinone. Couples the redox reaction to proton translocation, and thus conserves the redox energy in a proton gradient. The sequence is that of NAD(P)H-quinone oxidoreductase subunit I from Prochlorococcus marinus (strain NATL2A).